Reading from the N-terminus, the 304-residue chain is MARAEGDSWDVASSVGATAAMVAAGRAVATRDPRGLIDDPYAAPLVRAVGIEFFTKVADGEFDMTELDPSSAAEMQARIDEMALRTRFFDDYFLASTAGGIRQVVILASGLDSRAYRLPWPDGTVVYEIDQPAVIDFKTSTLAGIGAEPTAERRTVAIDLREDWPAALRAAGFDSAAPTAWCAEGLLIYLPPEAQDLLFDNVTALSATGSTVATEYVPGILNFDAEKARAASAQMRERGLDLDMPSLVYHGERKHVMEYLTSLGWTMAGLPRTDLFAKHGVPMVAHDNDPLGEIVYVSGTYQNR.

S-adenosyl-L-methionine contacts are provided by residues Asp130 and 159 to 160 (DL).

Belongs to the UPF0677 family.

Functionally, exhibits S-adenosyl-L-methionine-dependent methyltransferase activity. The polypeptide is Putative S-adenosyl-L-methionine-dependent methyltransferase Mjls_1071 (Mycobacterium sp. (strain JLS)).